A 206-amino-acid chain; its full sequence is Proteasome subunit beta 2 (206 aa).

The propeptide at 1 to 10 (MLHLKEKLKG) is removed in mature form; by autocatalysis. Thr11 serves as the catalytic Nucleophile.

The protein belongs to the peptidase T1B family. The 20S proteasome core is composed of 14 alpha and 14 beta subunits that assemble into four stacked heptameric rings, resulting in a barrel-shaped structure. The two inner rings, each composed of seven catalytic beta subunits, are sandwiched by two outer rings, each composed of seven alpha subunits. The catalytic chamber with the active sites is on the inside of the barrel. Has a gated structure, the ends of the cylinder being occluded by the N-termini of the alpha-subunits. Is capped at one or both ends by the proteasome regulatory ATPase, PAN.

Its subcellular location is the cytoplasm. It carries out the reaction Cleavage of peptide bonds with very broad specificity.. With respect to regulation, the formation of the proteasomal ATPase PAN-20S proteasome complex, via the docking of the C-termini of PAN into the intersubunit pockets in the alpha-rings, triggers opening of the gate for substrate entry. Interconversion between the open-gate and close-gate conformations leads to a dynamic regulation of the 20S proteasome proteolysis activity. Component of the proteasome core, a large protease complex with broad specificity involved in protein degradation. This is Proteasome subunit beta 2 from Pyrococcus furiosus (strain ATCC 43587 / DSM 3638 / JCM 8422 / Vc1).